Here is a 465-residue protein sequence, read N- to C-terminus: ATP synthase subunit beta (465 aa).

148–155 (GGAGVGKT) provides a ligand contact to ATP.

Belongs to the ATPase alpha/beta chains family. F-type ATPases have 2 components, CF(1) - the catalytic core - and CF(0) - the membrane proton channel. CF(1) has five subunits: alpha(3), beta(3), gamma(1), delta(1), epsilon(1). CF(0) has three main subunits: a(1), b(2) and c(9-12). The alpha and beta chains form an alternating ring which encloses part of the gamma chain. CF(1) is attached to CF(0) by a central stalk formed by the gamma and epsilon chains, while a peripheral stalk is formed by the delta and b chains.

It is found in the cell inner membrane. It carries out the reaction ATP + H2O + 4 H(+)(in) = ADP + phosphate + 5 H(+)(out). In terms of biological role, produces ATP from ADP in the presence of a proton gradient across the membrane. The catalytic sites are hosted primarily by the beta subunits. This Neisseria meningitidis serogroup B (strain ATCC BAA-335 / MC58) protein is ATP synthase subunit beta.